The chain runs to 328 residues: Ribosomal RNA small subunit methyltransferase H (328 aa).

S-adenosyl-L-methionine is bound by residues 37–39, D57, F83, D104, and Q111; that span reads GGH.

The protein belongs to the methyltransferase superfamily. RsmH family.

It is found in the cytoplasm. The enzyme catalyses cytidine(1402) in 16S rRNA + S-adenosyl-L-methionine = N(4)-methylcytidine(1402) in 16S rRNA + S-adenosyl-L-homocysteine + H(+). Functionally, specifically methylates the N4 position of cytidine in position 1402 (C1402) of 16S rRNA. The sequence is that of Ribosomal RNA small subunit methyltransferase H from Neisseria meningitidis serogroup B (strain ATCC BAA-335 / MC58).